The following is a 210-amino-acid chain: MKKGILGRKHGMTQIFDEKGEVIPVTVIEAGPCVVVQKKTVETDGYNAIQVGFGDVKEKRLTKPLIGHFKKAGVPFKRYLREFRLDDISGYEVGSEIKVDIFKPGDRVDVTGISKGKGFAGVVKRYGANRGPMSHGSKYHRRVGSMGATTDPGRTFKGKIMPGHMGHERVTIQNLEVVKVDPELNLLLVKGSVPGPKGSLLIIKDSVKSK.

Residues 131–154 (GPMSHGSKYHRRVGSMGATTDPGR) are disordered.

It belongs to the universal ribosomal protein uL3 family. As to quaternary structure, part of the 50S ribosomal subunit. Forms a cluster with proteins L14 and L19.

One of the primary rRNA binding proteins, it binds directly near the 3'-end of the 23S rRNA, where it nucleates assembly of the 50S subunit. The chain is Large ribosomal subunit protein uL3 from Thermoanaerobacter pseudethanolicus (strain ATCC 33223 / 39E) (Clostridium thermohydrosulfuricum).